The following is a 740-amino-acid chain: Copalyl diphosphate synthase 2 (740 aa).

Position 154 (Lys154) interacts with substrate. 2 residues coordinate Mg(2+): Asp287 and Asp289. Positions 287–290 (DADD) match the DXDD motif motif. Residue Lys373 participates in substrate binding.

This sequence belongs to the terpene synthase family. Mg(2+) serves as cofactor.

It catalyses the reaction (2E,6E,10E)-geranylgeranyl diphosphate = (+)-copalyl diphosphate. Its pathway is secondary metabolite biosynthesis; terpenoid biosynthesis. In terms of biological role, monofunctional diterpene synthase converting geranylgeranyl diphosphate to copalyl diphosphate. The polypeptide is Copalyl diphosphate synthase 2 (CPS2) (Selaginella moellendorffii (Spikemoss)).